A 196-amino-acid polypeptide reads, in one-letter code: Putative NADH dehydrogenase/NAD(P)H nitroreductase XCV0587 (196 aa).

Belongs to the nitroreductase family. HadB/RutE subfamily. FMN serves as cofactor.

The chain is Putative NADH dehydrogenase/NAD(P)H nitroreductase XCV0587 from Xanthomonas euvesicatoria pv. vesicatoria (strain 85-10) (Xanthomonas campestris pv. vesicatoria).